A 127-amino-acid chain; its full sequence is Holo-[acyl-carrier-protein] synthase (127 aa).

Positions 9 and 58 each coordinate Mg(2+).

This sequence belongs to the P-Pant transferase superfamily. AcpS family. Requires Mg(2+) as cofactor.

Its subcellular location is the cytoplasm. The catalysed reaction is apo-[ACP] + CoA = holo-[ACP] + adenosine 3',5'-bisphosphate + H(+). In terms of biological role, transfers the 4'-phosphopantetheine moiety from coenzyme A to a Ser of acyl-carrier-protein. This is Holo-[acyl-carrier-protein] synthase from Shewanella putrefaciens (strain CN-32 / ATCC BAA-453).